The chain runs to 198 residues: Small ribosomal subunit protein uS7 (198 aa).

This sequence belongs to the universal ribosomal protein uS7 family. In terms of assembly, part of the 30S ribosomal subunit.

In terms of biological role, one of the primary rRNA binding proteins, it binds directly to 16S rRNA where it nucleates assembly of the head domain of the 30S subunit. Is located at the subunit interface close to the decoding center. This is Small ribosomal subunit protein uS7 from Nanoarchaeum equitans (strain Kin4-M).